The primary structure comprises 175 residues: B9 domain-containing protein 2 (175 aa).

The C2 B9-type domain occupies 2–118 (AELHIIGQII…QCVTWRPLGS (117 aa)).

Belongs to the B9D family. In terms of assembly, part of the tectonic-like complex (also named B9 complex).

The protein resides in the cytoplasm. It is found in the cytoskeleton. Its subcellular location is the cilium basal body. It localises to the cilium axoneme. Functionally, component of the tectonic-like complex, a complex localized at the transition zone of primary cilia and acting as a barrier that prevents diffusion of transmembrane proteins between the cilia and plasma membranes. This chain is B9 domain-containing protein 2 (b9d2), found in Danio rerio (Zebrafish).